A 327-amino-acid polypeptide reads, in one-letter code: GMP reductase (327 aa).

Residue Cys-176 is the Thioimidate intermediate of the active site. 205-228 (IIADGGIRTHGDIAKSIRFGASMV) lines the NADP(+) pocket.

The protein belongs to the IMPDH/GMPR family. GuaC type 2 subfamily.

The enzyme catalyses IMP + NH4(+) + NADP(+) = GMP + NADPH + 2 H(+). Its function is as follows. Catalyzes the irreversible NADPH-dependent deamination of GMP to IMP. It functions in the conversion of nucleobase, nucleoside and nucleotide derivatives of G to A nucleotides, and in maintaining the intracellular balance of A and G nucleotides. This is GMP reductase from Streptococcus pyogenes serotype M1.